The following is a 134-amino-acid chain: Cytochrome b (134 aa).

The next 3 helical transmembrane spans lie at 33 to 53 (FGSLLGVCLGVQILTGLFLAI), 77 to 98 (WLLRYLHANGASMFFICLYLHV), and 113 to 133 (WNIGILLLFAVMATAFMGYVL). Residues His83 and His97 each coordinate heme b.

The protein belongs to the cytochrome b family. In terms of assembly, the cytochrome bc1 complex contains 11 subunits: 3 respiratory subunits (MT-CYB, CYC1 and UQCRFS1), 2 core proteins (UQCRC1 and UQCRC2) and 6 low-molecular weight proteins (UQCRH/QCR6, UQCRB/QCR7, UQCRQ/QCR8, UQCR10/QCR9, UQCR11/QCR10 and a cleavage product of UQCRFS1). This cytochrome bc1 complex then forms a dimer. Heme b serves as cofactor.

The protein localises to the mitochondrion inner membrane. Component of the ubiquinol-cytochrome c reductase complex (complex III or cytochrome b-c1 complex) that is part of the mitochondrial respiratory chain. The b-c1 complex mediates electron transfer from ubiquinol to cytochrome c. Contributes to the generation of a proton gradient across the mitochondrial membrane that is then used for ATP synthesis. The protein is Cytochrome b (MT-CYB) of Platyrrhinus helleri (Heller's broad-nosed bat).